Consider the following 121-residue polypeptide: Protein p14.5 (121 aa).

Position 2 is an N-acetylalanine; by host (alanine 2). The interval 84 to 121 (SLVPDEADNKPEDDEESGGAKPKKKKHLFPKLSSHKSK) is disordered. Residues 104–121 (KPKKKKHLFPKLSSHKSK) show a composition bias toward basic residues.

Belongs to the asfivirus structural protein p14.5 family. In terms of assembly, interacts with the major capsid protein. Interacts with host IRF3; this interaction interferes with the recruitment of IRF3 to TBK1. In terms of processing, acetylated.

It localises to the virion. In terms of biological role, structural protein required for transport of intracellular particles from the assembly sites to the plasma membrane. Binds to both ssDNA and dsDNA. Suppressed the activation of the cGAS/STING pathway by interfering with the recruitment of IRF3 to TBK1, which in turn suppresses IRF3 phosphorylation, decreasing interferon production. The protein is Protein p14.5 of African swine fever virus (isolate Pig/Kenya/KEN-50/1950) (ASFV).